Reading from the N-terminus, the 601-residue chain is Tripeptidyl-peptidase SED4 (601 aa).

Positions 1–22 (MVSFTLRAIGACLVSLPALVTA) are cleaved as a signal peptide. Residues 23 to 202 (APTSHISGDF…SVFTSDLEIT (180 aa)) constitute a propeptide, removed in mature form. 2 N-linked (GlcNAc...) asparagine glycosylation sites follow: N210 and N281. The 390-residue stretch at 212 to 601 (TITPDCIRDL…ETLSKLVLQY (390 aa)) folds into the Peptidase S53 domain. Residues E288 and D292 each act as charge relay system in the active site. N323 carries N-linked (GlcNAc...) asparagine glycosylation. Catalysis depends on S504, which acts as the Charge relay system. 2 residues coordinate Ca(2+): D546 and I547. An N-linked (GlcNAc...) asparagine glycan is attached at N575. 2 residues coordinate Ca(2+): G579 and D581.

Ca(2+) is required as a cofactor.

The protein localises to the secreted. Its subcellular location is the extracellular space. The catalysed reaction is Release of an N-terminal tripeptide from a polypeptide.. Functionally, secreted tripeptidyl-peptidase which degrades proteins at acidic pHs and is involved in virulence. The sequence is that of Tripeptidyl-peptidase SED4 (SED4) from Arthroderma otae (strain ATCC MYA-4605 / CBS 113480) (Microsporum canis).